Consider the following 553-residue polypeptide: Flotillin family inner membrane protein YqiK (553 aa).

The Periplasmic portion of the chain corresponds to 1 to 9 (MDDIVNSVP). A helical membrane pass occupies residues 10–30 (SWMFTAIIAVCILFIIGIIFA). The Cytoplasmic segment spans residues 31–553 (RLYRRASAEQ…STTPVEEKAE (523 aa)).

It belongs to the band 7/mec-2 family. Flotillin subfamily. Homooligomerizes.

Its subcellular location is the cell inner membrane. The protein localises to the membrane raft. Functionally, found in membrane microdomains that may be equivalent to eukaryotic membrane rafts. FMMs are highly dynamic and increase in number as cells age. Flotillins are thought to be important factors in membrane fluidity. The sequence is that of Flotillin family inner membrane protein YqiK (yqiK) from Escherichia coli (strain K12).